Consider the following 450-residue polypeptide: Class E vacuolar protein-sorting machinery protein HSE1 (450 aa).

In terms of domain architecture, VHS spans A15 to L145. 3 disordered regions span residues W141 to E167, F179 to S212, and P374 to Y450. The span at E147–E167 shows a compositional bias: basic and acidic residues. The region spanning D163–S182 is the UIM domain. The span at Q184–L196 shows a compositional bias: polar residues. Residues Q197–Q209 show a composition bias toward low complexity. The SH3 domain maps to S212 to E271. The segment covering N394–N432 has biased composition (low complexity).

Belongs to the STAM family. As to quaternary structure, component of the ESCRT-0 complex composed of HSE1 and VPS27.

It localises to the endosome membrane. In terms of biological role, component of the ESCRT-0 complex which is the sorting receptor for ubiquitinated cargo proteins at the multivesicular body (MVB). The protein is Class E vacuolar protein-sorting machinery protein HSE1 (HSE1) of Candida glabrata (strain ATCC 2001 / BCRC 20586 / JCM 3761 / NBRC 0622 / NRRL Y-65 / CBS 138) (Yeast).